A 140-amino-acid polypeptide reads, in one-letter code: MTSMTQSLREVIKAMTKARNFERVLGKITLVSAAPGKVICEMKVEEEHTNAIGTLHGGLTATLVDNISTMALLCTERGAPGVSVDMNITYMSPAKLGEDIVITAHVLKQGKTLAFTSVDLTNKATGKLIAQGRHTKHLGN.

Met1 carries the post-translational modification N-acetylmethionine. An N-acetylthreonine; in Acyl-coenzyme A thioesterase 13, N-terminally processed modification is found at Thr2. Lys27, Lys37, and Lys43 each carry N6-acetyllysine. CoA is bound at residue Glu46. The substrate site is built by Asn50 and Gly81. Residues Ser83, 90–95 (YMSPAK), and 108–113 (KQGKTL) contribute to the CoA site. An N6-acetyllysine mark is found at Lys108 and Lys127. Position 137 (His137) interacts with CoA.

The protein belongs to the thioesterase PaaI family. Homotetramer. Interacts with PCTP.

It is found in the cytoplasm. It localises to the cytosol. The protein localises to the mitochondrion. The protein resides in the nucleus. Its subcellular location is the cytoskeleton. It is found in the spindle. The catalysed reaction is a fatty acyl-CoA + H2O = a fatty acid + CoA + H(+). The enzyme catalyses decanoyl-CoA + H2O = decanoate + CoA + H(+). It catalyses the reaction octanoyl-CoA + H2O = octanoate + CoA + H(+). It carries out the reaction butanoyl-CoA + H2O = butanoate + CoA + H(+). The catalysed reaction is hexanoyl-CoA + H2O = hexanoate + CoA + H(+). The enzyme catalyses tetradecanoyl-CoA + H2O = tetradecanoate + CoA + H(+). It catalyses the reaction hexadecanoyl-CoA + H2O = hexadecanoate + CoA + H(+). It carries out the reaction dodecanoyl-CoA + H2O = dodecanoate + CoA + H(+). The catalysed reaction is (9Z)-octadecenoyl-CoA + H2O = (9Z)-octadecenoate + CoA + H(+). The enzyme catalyses (5Z,8Z,11Z,14Z)-eicosatetraenoyl-CoA + H2O = (5Z,8Z,11Z,14Z)-eicosatetraenoate + CoA + H(+). Functionally, catalyzes the hydrolysis of acyl-CoAs into free fatty acids and coenzyme A (CoASH), regulating their respective intracellular levels. Has acyl-CoA thioesterase activity towards medium (C12) and long-chain (C18) fatty acyl-CoA substrates. Can also hydrolyze 3-hydroxyphenylacetyl-CoA and 3,4-dihydroxyphenylacetyl-CoA (in vitro). May play a role in controlling adaptive thermogenesis. This chain is Acyl-coenzyme A thioesterase 13, found in Homo sapiens (Human).